The sequence spans 265 residues: Ribosomal RNA small subunit methyltransferase A (265 aa).

The S-adenosyl-L-methionine site is built by H17, L19, G44, E65, D90, and N112.

It belongs to the class I-like SAM-binding methyltransferase superfamily. rRNA adenine N(6)-methyltransferase family. RsmA subfamily.

Its subcellular location is the cytoplasm. It catalyses the reaction adenosine(1518)/adenosine(1519) in 16S rRNA + 4 S-adenosyl-L-methionine = N(6)-dimethyladenosine(1518)/N(6)-dimethyladenosine(1519) in 16S rRNA + 4 S-adenosyl-L-homocysteine + 4 H(+). Specifically dimethylates two adjacent adenosines (A1518 and A1519) in the loop of a conserved hairpin near the 3'-end of 16S rRNA in the 30S particle. May play a critical role in biogenesis of 30S subunits. The chain is Ribosomal RNA small subunit methyltransferase A from Xylella fastidiosa (strain Temecula1 / ATCC 700964).